The chain runs to 258 residues: Type III pantothenate kinase (258 aa).

Position 6–13 (6–13 (DVGNTNIV)) interacts with ATP. Substrate-binding positions include Tyr100 and 107–110 (GADR). The Proton acceptor role is filled by Asp109. Asp129 is a K(+) binding site. Thr132 lines the ATP pocket. Position 184 (Thr184) interacts with substrate.

The protein belongs to the type III pantothenate kinase family. In terms of assembly, homodimer. Requires NH4(+) as cofactor. It depends on K(+) as a cofactor.

The protein localises to the cytoplasm. It catalyses the reaction (R)-pantothenate + ATP = (R)-4'-phosphopantothenate + ADP + H(+). It functions in the pathway cofactor biosynthesis; coenzyme A biosynthesis; CoA from (R)-pantothenate: step 1/5. Its function is as follows. Catalyzes the phosphorylation of pantothenate (Pan), the first step in CoA biosynthesis. The chain is Type III pantothenate kinase from Clostridium botulinum (strain Kyoto / Type A2).